A 194-amino-acid polypeptide reads, in one-letter code: Peptidyl-tRNA hydrolase (194 aa).

Tyrosine 16 lines the tRNA pocket. Histidine 21 serves as the catalytic Proton acceptor. Phenylalanine 67, asparagine 69, and asparagine 115 together coordinate tRNA.

It belongs to the PTH family. Monomer.

The protein localises to the cytoplasm. The catalysed reaction is an N-acyl-L-alpha-aminoacyl-tRNA + H2O = an N-acyl-L-amino acid + a tRNA + H(+). Functionally, hydrolyzes ribosome-free peptidyl-tRNAs (with 1 or more amino acids incorporated), which drop off the ribosome during protein synthesis, or as a result of ribosome stalling. Catalyzes the release of premature peptidyl moieties from peptidyl-tRNA molecules trapped in stalled 50S ribosomal subunits, and thus maintains levels of free tRNAs and 50S ribosomes. In Citrobacter koseri (strain ATCC BAA-895 / CDC 4225-83 / SGSC4696), this protein is Peptidyl-tRNA hydrolase.